A 545-amino-acid polypeptide reads, in one-letter code: CTP synthase (545 aa).

The tract at residues Met1–Leu265 is amidoligase domain. Ser13 lines the CTP pocket. Ser13 is a binding site for UTP. Ser14–Ile19 is an ATP binding site. Tyr54 serves as a coordination point for L-glutamine. Residue Asp71 coordinates ATP. Mg(2+) contacts are provided by Asp71 and Glu139. CTP is bound by residues Asp146–Glu148, Lys186–Gln191, and Lys222. UTP-binding positions include Lys186–Gln191 and Lys222. The 252-residue stretch at Thr290 to Ala541 folds into the Glutamine amidotransferase type-1 domain. Position 351 (Gly351) interacts with L-glutamine. Cys378 functions as the Nucleophile; for glutamine hydrolysis in the catalytic mechanism. Residues Leu379 to Gln382, Glu402, and Arg469 each bind L-glutamine. Residues His514 and Glu516 contribute to the active site.

This sequence belongs to the CTP synthase family. As to quaternary structure, homotetramer.

It catalyses the reaction UTP + L-glutamine + ATP + H2O = CTP + L-glutamate + ADP + phosphate + 2 H(+). The enzyme catalyses L-glutamine + H2O = L-glutamate + NH4(+). The catalysed reaction is UTP + NH4(+) + ATP = CTP + ADP + phosphate + 2 H(+). It functions in the pathway pyrimidine metabolism; CTP biosynthesis via de novo pathway; CTP from UDP: step 2/2. Its activity is regulated as follows. Allosterically activated by GTP, when glutamine is the substrate; GTP has no effect on the reaction when ammonia is the substrate. The allosteric effector GTP functions by stabilizing the protein conformation that binds the tetrahedral intermediate(s) formed during glutamine hydrolysis. Inhibited by the product CTP, via allosteric rather than competitive inhibition. Its function is as follows. Catalyzes the ATP-dependent amination of UTP to CTP with either L-glutamine or ammonia as the source of nitrogen. Regulates intracellular CTP levels through interactions with the four ribonucleotide triphosphates. This is CTP synthase from Alcanivorax borkumensis (strain ATCC 700651 / DSM 11573 / NCIMB 13689 / SK2).